A 36-amino-acid chain; its full sequence is Termicin (36 aa).

3 cysteine pairs are disulfide-bonded: cysteine 2-cysteine 24, cysteine 7-cysteine 29, and cysteine 11-cysteine 31. At glycine 36 the chain carries Glycine amide.

In terms of tissue distribution, expressed in salivary glands and hemocytes.

It localises to the secreted. Its function is as follows. Weak activity against Gram-positive bacteria B.megaterium, S.pyogenes and M.luteus, strong activity against yeasts C.albicans, C.neoformans and S.cerevisiae and filamentous fungi F.oxysporum, F.culmorum, N.crassa and N.hematococca. Less active against filamentous fungus T.viride. Inactive against Gram-positive bacteria A.viridans and S.aureus, filamentous fungi A.fumigatus and B.bassiana and yeast C.glabrata. The protein is Termicin of Pseudacanthotermes spiniger.